Here is a 66-residue protein sequence, read N- to C-terminus: UPF0150 protein AF_0072.1 (66 aa).

It belongs to the UPF0150 family.

The chain is UPF0150 protein AF_0072.1 from Archaeoglobus fulgidus (strain ATCC 49558 / DSM 4304 / JCM 9628 / NBRC 100126 / VC-16).